The sequence spans 77 residues: Sec-independent protein translocase protein TatA (77 aa).

The helical transmembrane segment at 1-21 (MGSFSIWHWLVVGILVLLLFG) threads the bilayer. The interval 41-77 (KGMSEDDAPTPAPKQIDAQRAPDLSATPTPTAETENR) is disordered. Residues 66–77 (ATPTPTAETENR) show a composition bias toward polar residues.

The protein belongs to the TatA/E family. As to quaternary structure, the Tat system comprises two distinct complexes: a TatABC complex, containing multiple copies of TatA, TatB and TatC subunits, and a separate TatA complex, containing only TatA subunits. Substrates initially bind to the TatABC complex, which probably triggers association of the separate TatA complex to form the active translocon.

It localises to the cell inner membrane. In terms of biological role, part of the twin-arginine translocation (Tat) system that transports large folded proteins containing a characteristic twin-arginine motif in their signal peptide across membranes. TatA could form the protein-conducting channel of the Tat system. This Sphingopyxis alaskensis (strain DSM 13593 / LMG 18877 / RB2256) (Sphingomonas alaskensis) protein is Sec-independent protein translocase protein TatA.